The chain runs to 150 residues: MSVEPPPELEEKAASEPEAGAMPEKRAGAQAAGSTWLQGFGPPSVYHAAIVIFLEFFAWGLLTTPMLTVLHETFSQHTFLMNGLIQGVKGLLSFLSAPLIGALSDVWGRKPFLLGTVFFTCFPIPLMRISPCRVWWRAPVVPATCGRRMA.

A disordered region spans residues 1-25; the sequence is MSVEPPPELEEKAASEPEAGAMPEK. At 1 to 49 the chain is on the extracellular side; that stretch reads MSVEPPPELEEKAASEPEAGAMPEKRAGAQAAGSTWLQGFGPPSVYHAA. A helical transmembrane segment spans residues 50-70; the sequence is IVIFLEFFAWGLLTTPMLTVL. Topologically, residues 71–82 are cytoplasmic; that stretch reads HETFSQHTFLMN. Residues 83–103 traverse the membrane as a helical segment; it reads GLIQGVKGLLSFLSAPLIGAL. Topologically, residues 104–111 are extracellular; sequence SDVWGRKP. The chain crosses the membrane as a helical span at residues 112–132; it reads FLLGTVFFTCFPIPLMRISPC. Over 133–150 the chain is Cytoplasmic; the sequence is RVWWRAPVVPATCGRRMA.

It belongs to the major facilitator superfamily.

The protein resides in the membrane. The protein is Major facilitator superfamily domain-containing 14C pseudogene of Homo sapiens (Human).